Consider the following 147-residue polypeptide: Phospholipase A2 inhibitor subunit A (147 aa).

A C-type lectin domain is found at 62–143; it reads EICEEAGGHI…DENLLVVCEF (82 aa). Disulfide bonds link Cys-64–Cys-141 and Cys-119–Cys-133. N-linked (GlcNAc...) asparagine glycosylation is present at Asn-103.

Belongs to the alpha-type phospholipase A2 inhibitor family. As to quaternary structure, homo- or heterotrimer; homotrimer of PLI-A chains, two PLI-A and one PLI-B chains, one PLI-A and two PLI-B chains, and homotrimer of PLI-B chains (with a ratio of 1:3:3:1). In terms of tissue distribution, expressed by the liver.

It localises to the secreted. In terms of biological role, PLI binds directly phospholipase A2 in the presence or absence of calcium. Inhibitory activity of the PLI-A homotrimer is more specific than that of the PLI-B homotrimer. The polypeptide is Phospholipase A2 inhibitor subunit A (Protobothrops flavoviridis (Habu)).